Here is a 238-residue protein sequence, read N- to C-terminus: Ribonuclease PH (238 aa).

Phosphate contacts are provided by residues Arg86 and 124-126 (GTR).

This sequence belongs to the RNase PH family. In terms of assembly, homohexameric ring arranged as a trimer of dimers.

The enzyme catalyses tRNA(n+1) + phosphate = tRNA(n) + a ribonucleoside 5'-diphosphate. In terms of biological role, phosphorolytic 3'-5' exoribonuclease that plays an important role in tRNA 3'-end maturation. Removes nucleotide residues following the 3'-CCA terminus of tRNAs; can also add nucleotides to the ends of RNA molecules by using nucleoside diphosphates as substrates, but this may not be physiologically important. Probably plays a role in initiation of 16S rRNA degradation (leading to ribosome degradation) during starvation. This Alkalilimnicola ehrlichii (strain ATCC BAA-1101 / DSM 17681 / MLHE-1) protein is Ribonuclease PH.